A 309-amino-acid polypeptide reads, in one-letter code: Sulfur oxygenase/reductase (309 aa).

Position 31 is a cysteine persulfide (Cys31). His86, His90, and Glu114 together coordinate Fe cation.

In terms of assembly, homoicosatetramer. The resulting structure is a hollow sphere where catalysis takes place in the inside cavity. Fe cation is required as a cofactor.

It is found in the cytoplasm. The enzyme catalyses 4 sulfur + O2 + 4 H2O = 2 hydrogen sulfide + 2 sulfite + 6 H(+). With respect to regulation, inhibited by zinc. Catalyzes the simultaneous oxidation and reduction of elemental sulfur in the presence of oxygen, with sulfite and hydrogen sulfide as products. This is Sulfur oxygenase/reductase (sor) from Acidianus ambivalens (Desulfurolobus ambivalens).